The primary structure comprises 503 residues: Serine/threonine-protein kinase chk-1 (503 aa).

A Protein kinase domain is found at 24–286 (YRVVQTLGEG…IEQIQADPWY (263 aa)). ATP-binding positions include 30 to 38 (LGEGAFGEV) and lysine 54. Aspartate 150 (proton acceptor) is an active-site residue. Residues 320-346 (SAKRRHLETPNEKSTLAERQNASFSQP) are disordered. Positions 331–346 (EKSTLAERQNASFSQP) are enriched in polar residues. Serine 344 bears the Phosphoserine mark.

Belongs to the protein kinase superfamily. CAMK Ser/Thr protein kinase family. NIM1 subfamily. As to expression, expressed in the germline.

It localises to the cytoplasm. It is found in the nucleus. The protein resides in the perinuclear region. The catalysed reaction is L-seryl-[protein] + ATP = O-phospho-L-seryl-[protein] + ADP + H(+). The enzyme catalyses L-threonyl-[protein] + ATP = O-phospho-L-threonyl-[protein] + ADP + H(+). In terms of biological role, serine/threonine-protein kinase which is required for checkpoint-mediated cell cycle arrest and activation of DNA repair in response to the presence of DNA damage or unreplicated DNA. May also negatively regulate cell cycle progression during unperturbed cell cycles. Required for checkpoint mediated cell cycle arrest in response to DNA damage in germline cells. Delays cell-cycle reentry of the Z2 and Z3 primordial germ cells in response to transcription-induced DNA damage as they emerge from cell cycle arrest in L1 larvae. Essential for embryogenesis. The chain is Serine/threonine-protein kinase chk-1 from Caenorhabditis elegans.